The following is a 281-amino-acid chain: NAC domain-containing protein 6 (281 aa).

Residues 4-156 form the NAC domain; the sequence is LPVGSRFCPT…QDALTGFADQ (153 aa). 2 disordered regions span residues 84–109 and 211–249; these read GGSE…QKGD and LEGH…VTQE. The segment covering 94–109 has biased composition (basic and acidic residues); sequence NDGKKEIKDGHMQKGD. A DNA-binding region spans residues 109 to 162; it reads DGLRASDDLQKVVLCRIRYKKEANVNEFGLVNHQAHQTQDALTGFADQLEMMLE. Low complexity predominate over residues 229-239; the sequence is QQQQQQQQQQQ.

It localises to the nucleus. The polypeptide is NAC domain-containing protein 6 (NAC006) (Arabidopsis thaliana (Mouse-ear cress)).